A 427-amino-acid polypeptide reads, in one-letter code: MQKNITKISDTEQELEIILSAEEFGTEYNQELEEAKRTVQIKGFRKGHVPAGMIKKLVGPAIEASIAEKMASKHFSAIADEENIKPASRAAIESFSFDDNQLSIKLSYEIHPEFELKGFEGYTFTQPRYTITDEDVQKEINLILKGHGTLISIDDAASATDTVIGDVVKLNAEGEAEEGSAMENHHFNLEYLPEENPFRSALTGKKAGEIADVTTEPKDEETPAQIYRITVKEVKRLELPELTDELVKEISGQRFEHAADFTSDVRLQLEQHFTMKSEDELLESISAKLIEENPVSAPKTMIASFANMLVENAKRQMGGNFPKGFDAGQFEQAMAPNAEKHARWLLISQKIAEINNLSVTDDDIRAFAEKEAEKNPTLSVEEAISTYMSTEFRDYITDSILKDKVYDIIKSQVTITEEPTPIPVRQN.

Residues 160 to 240 enclose the PPIase FKBP-type domain; the sequence is TDTVIGDVVK…VKEVKRLELP (81 aa).

It belongs to the FKBP-type PPIase family. Tig subfamily.

Its subcellular location is the cytoplasm. It catalyses the reaction [protein]-peptidylproline (omega=180) = [protein]-peptidylproline (omega=0). In terms of biological role, involved in protein export. Acts as a chaperone by maintaining the newly synthesized protein in an open conformation. Functions as a peptidyl-prolyl cis-trans isomerase. This Chlorobium limicola (strain DSM 245 / NBRC 103803 / 6330) protein is Trigger factor.